The primary structure comprises 351 residues: Ferrochelatase (351 aa).

Residues H184 and E265 each contribute to the Fe cation site.

The protein belongs to the ferrochelatase family.

It is found in the cytoplasm. The catalysed reaction is heme b + 2 H(+) = protoporphyrin IX + Fe(2+). It functions in the pathway porphyrin-containing compound metabolism; protoheme biosynthesis; protoheme from protoporphyrin-IX: step 1/1. Functionally, catalyzes the ferrous insertion into protoporphyrin IX. This chain is Ferrochelatase, found in Rhodopirellula baltica (strain DSM 10527 / NCIMB 13988 / SH1).